A 212-amino-acid chain; its full sequence is Peptide methionine sulfoxide reductase MsrA (212 aa).

The active site involves Cys52.

Belongs to the MsrA Met sulfoxide reductase family.

The catalysed reaction is L-methionyl-[protein] + [thioredoxin]-disulfide + H2O = L-methionyl-(S)-S-oxide-[protein] + [thioredoxin]-dithiol. It carries out the reaction [thioredoxin]-disulfide + L-methionine + H2O = L-methionine (S)-S-oxide + [thioredoxin]-dithiol. In terms of biological role, has an important function as a repair enzyme for proteins that have been inactivated by oxidation. Catalyzes the reversible oxidation-reduction of methionine sulfoxide in proteins to methionine. This is Peptide methionine sulfoxide reductase MsrA from Escherichia coli O127:H6 (strain E2348/69 / EPEC).